The primary structure comprises 293 residues: Polyamine aminopropyltransferase (293 aa).

A PABS domain is found at 10–244; sequence HIWFTEYHNN…GFWSFTLASK (235 aa). Position 39 (Q39) interacts with S-methyl-5'-thioadenosine. Spermidine is bound by residues H70 and D94. Residues E114 and 145–146 each bind S-methyl-5'-thioadenosine; that span reads DG. D163 serves as the catalytic Proton acceptor. A spermidine-binding site is contributed by 163–166; the sequence is DCPD. S-methyl-5'-thioadenosine is bound at residue P170.

This sequence belongs to the spermidine/spermine synthase family. Homodimer or homotetramer.

The protein localises to the cytoplasm. It carries out the reaction S-adenosyl 3-(methylsulfanyl)propylamine + putrescine = S-methyl-5'-thioadenosine + spermidine + H(+). It functions in the pathway amine and polyamine biosynthesis; spermidine biosynthesis; spermidine from putrescine: step 1/1. In terms of biological role, catalyzes the irreversible transfer of a propylamine group from the amino donor S-adenosylmethioninamine (decarboxy-AdoMet) to putrescine (1,4-diaminobutane) to yield spermidine. The polypeptide is Polyamine aminopropyltransferase (Methanocaldococcus jannaschii (strain ATCC 43067 / DSM 2661 / JAL-1 / JCM 10045 / NBRC 100440) (Methanococcus jannaschii)).